Consider the following 225-residue polypeptide: Probable manganese catalase (225 aa).

Glu37 contributes to the Mn(2+) binding site. The Ca(2+) site is built by Asp58 and Asp62. Mn(2+) contacts are provided by Glu67, His70, Glu138, and His171. Ser204 contributes to the Ca(2+) binding site. The tract at residues 204–225 (STPGRYVQDPNPTEPSFSNPRR) is disordered. A compositionally biased stretch (polar residues) spans 213 to 225 (PNPTEPSFSNPRR).

It belongs to the manganese catalase family. Ca(2+) serves as cofactor. The cofactor is Mn(2+).

The catalysed reaction is 2 H2O2 = O2 + 2 H2O. In terms of biological role, catalyzes the decomposition of hydrogen peroxide into water and oxygen. The sequence is that of Probable manganese catalase from Clostridium acetobutylicum (strain ATCC 824 / DSM 792 / JCM 1419 / IAM 19013 / LMG 5710 / NBRC 13948 / NRRL B-527 / VKM B-1787 / 2291 / W).